Consider the following 208-residue polypeptide: Octanoyltransferase (208 aa).

The BPL/LPL catalytic domain occupies 30–208; the sequence is GTASEAVFIL…ILKQEFYKIF (179 aa). Residues 69–76, 142–144, and 155–157 contribute to the substrate site; these read RGGKFTYH, SIG, and GVA. C173 functions as the Acyl-thioester intermediate in the catalytic mechanism.

The protein belongs to the LipB family.

The protein localises to the cytoplasm. It catalyses the reaction octanoyl-[ACP] + L-lysyl-[protein] = N(6)-octanoyl-L-lysyl-[protein] + holo-[ACP] + H(+). Its pathway is protein modification; protein lipoylation via endogenous pathway; protein N(6)-(lipoyl)lysine from octanoyl-[acyl-carrier-protein]: step 1/2. Functionally, catalyzes the transfer of endogenously produced octanoic acid from octanoyl-acyl-carrier-protein onto the lipoyl domains of lipoate-dependent enzymes. Lipoyl-ACP can also act as a substrate although octanoyl-ACP is likely to be the physiological substrate. The sequence is that of Octanoyltransferase from Orientia tsutsugamushi (strain Ikeda) (Rickettsia tsutsugamushi).